Reading from the N-terminus, the 233-residue chain is MEAYKMFAFVVLLATTLYQAYATDPTQLQDFCVGVNKPNDGLFVNGLFCKDPMEVNPDDFLFRGLNMPANTDNALGFAATLVTAANLPGLNTLGISVARLDFAPHGLNPPHTHPRATEVFVVLEGTFYVGFVTSNLADGGNKLFAKVLNKGDVFVFPQGLIHFQLNIGNYPGVGISGLSSQNPGVITIANAVFGPEHLSQLMFLLRPSISMRIWSSFFRIGSQVVAATTSMCS.

A signal peptide spans 1-22 (MEAYKMFAFVVLLATTLYQAYA). C32 and C49 are disulfide-bonded. Residues 63-215 (RGLNMPANTD…RPSISMRIWS (153 aa)) enclose the Cupin type-1 domain. H111, H113, E118, and H162 together coordinate Mn(2+).

It belongs to the germin family. As to quaternary structure, oligomer (believed to be a pentamer but probably hexamer). Expressed at high levels in unstressed roots.

It is found in the secreted. Its subcellular location is the extracellular space. The protein localises to the apoplast. May be involved in seed germination. This Mesembryanthemum crystallinum (Common ice plant) protein is Germin-like protein.